Consider the following 530-residue polypeptide: Arginine--tRNA ligase (530 aa).

Residues 113-123 (ANPTGPLHIGH) carry the 'HIGH' region motif.

This sequence belongs to the class-I aminoacyl-tRNA synthetase family. As to quaternary structure, monomer.

Its subcellular location is the cytoplasm. It carries out the reaction tRNA(Arg) + L-arginine + ATP = L-arginyl-tRNA(Arg) + AMP + diphosphate. In Campylobacter jejuni subsp. jejuni serotype O:6 (strain 81116 / NCTC 11828), this protein is Arginine--tRNA ligase.